The following is a 495-amino-acid chain: UDP-N-acetylmuramoyl-L-alanyl-D-glutamate--2,6-diaminopimelate ligase (495 aa).

UDP-N-acetyl-alpha-D-muramoyl-L-alanyl-D-glutamate is bound by residues leucine 27, serine 29, and 44-46 (HQT). ATP is bound at residue 116–122 (GTNGKTT). Residues asparagine 157, 158–159 (TT), serine 185, glutamine 191, and arginine 193 contribute to the UDP-N-acetyl-alpha-D-muramoyl-L-alanyl-D-glutamate site. Lysine 225 bears the N6-carboxylysine mark. Residues arginine 390, 414–417 (DNPR), glycine 465, and glutamate 469 each bind meso-2,6-diaminopimelate. Positions 414-417 (DNPR) match the Meso-diaminopimelate recognition motif motif.

The protein belongs to the MurCDEF family. MurE subfamily. It depends on Mg(2+) as a cofactor. Post-translationally, carboxylation is probably crucial for Mg(2+) binding and, consequently, for the gamma-phosphate positioning of ATP.

It localises to the cytoplasm. The enzyme catalyses UDP-N-acetyl-alpha-D-muramoyl-L-alanyl-D-glutamate + meso-2,6-diaminopimelate + ATP = UDP-N-acetyl-alpha-D-muramoyl-L-alanyl-gamma-D-glutamyl-meso-2,6-diaminopimelate + ADP + phosphate + H(+). It participates in cell wall biogenesis; peptidoglycan biosynthesis. In terms of biological role, catalyzes the addition of meso-diaminopimelic acid to the nucleotide precursor UDP-N-acetylmuramoyl-L-alanyl-D-glutamate (UMAG) in the biosynthesis of bacterial cell-wall peptidoglycan. This chain is UDP-N-acetylmuramoyl-L-alanyl-D-glutamate--2,6-diaminopimelate ligase, found in Photorhabdus laumondii subsp. laumondii (strain DSM 15139 / CIP 105565 / TT01) (Photorhabdus luminescens subsp. laumondii).